Reading from the N-terminus, the 380-residue chain is Cytochrome b (380 aa).

4 helical membrane-spanning segments follow: residues 34 to 54, 78 to 99, 114 to 134, and 179 to 199; these read FGSLLGICLTTQILTGLLLAA, WLIRNLHANGASFFFICIYMHV, WNTGVILLLTLMATAFVGYVL, and FFTLHFLLPFMIMGLTLIHLT. The heme b site is built by His-84 and His-98. Heme b-binding residues include His-183 and His-197. His-202 contacts a ubiquinone. 4 helical membrane-spanning segments follow: residues 227 to 247, 289 to 309, 321 to 341, and 348 to 368; these read LKDILGFMLMFLPLMTLALFS, LGGVLALAASMLVLFLAPLLH, LSQLLFWTLTANLLILTWVGS, and FMIIGQLASLTYFTILLILFP.

The protein belongs to the cytochrome b family. In terms of assembly, the cytochrome bc1 complex contains 11 subunits: 3 respiratory subunits (MT-CYB, CYC1 and UQCRFS1), 2 core proteins (UQCRC1 and UQCRC2) and 6 low-molecular weight proteins (UQCRH/QCR6, UQCRB/QCR7, UQCRQ/QCR8, UQCR10/QCR9, UQCR11/QCR10 and a cleavage product of UQCRFS1). This cytochrome bc1 complex then forms a dimer. Requires heme b as cofactor.

The protein localises to the mitochondrion inner membrane. Its function is as follows. Component of the ubiquinol-cytochrome c reductase complex (complex III or cytochrome b-c1 complex) that is part of the mitochondrial respiratory chain. The b-c1 complex mediates electron transfer from ubiquinol to cytochrome c. Contributes to the generation of a proton gradient across the mitochondrial membrane that is then used for ATP synthesis. This is Cytochrome b (MT-CYB) from Balearica pavonina (Black crowned-crane).